The primary structure comprises 84 residues: U21-theraphotoxin-Cg1a 2 (84 aa).

The N-terminal stretch at 1–21 (MKVSVLITLAVLGVMFLFTSA) is a signal peptide. Residues 22–47 (EERGSDQMDSPAWLKSMEIIFQSEER) constitute a propeptide that is removed on maturation. Intrachain disulfides connect cysteine 49-cysteine 63, cysteine 56-cysteine 68, and cysteine 62-cysteine 76. Residue valine 82 is modified to Valine amide.

The protein belongs to the neurotoxin 10 (Hwtx-1) family. 05 (F4a) subfamily. As to expression, expressed by the venom gland.

It localises to the secreted. In terms of biological role, probable ion channel inhibitor. The polypeptide is U21-theraphotoxin-Cg1a 2 (Chilobrachys guangxiensis (Chinese earth tiger tarantula)).